A 1194-amino-acid chain; its full sequence is Immunoglobulin superfamily member 3 (1194 aa).

The first 19 residues, methionine 1–alanine 19, serve as a signal peptide directing secretion. Ig-like C2-type domains are found at residues glutamine 20–asparagine 138, proline 143–methionine 262, proline 276–threonine 386, proline 401–threonine 539, phenylalanine 545–leucine 661, proline 676–serine 803, proline 813–threonine 945, and proline 949–threonine 1097. Topologically, residues glutamine 20–alanine 1124 are extracellular. 2 cysteine pairs are disulfide-bonded: cysteine 42–cysteine 120 and cysteine 167–cysteine 246. Asparagine 43 is a glycosylation site (N-linked (GlcNAc...) asparagine). Residues glutamate 250–isoleucine 252 carry the EWI motif motif. Residues cysteine 302 and cysteine 376 are joined by a disulfide bond. An N-linked (GlcNAc...) asparagine glycan is attached at asparagine 418. 5 disulfide bridges follow: cysteine 432/cysteine 511, cysteine 566/cysteine 645, cysteine 701/cysteine 782, cysteine 838/cysteine 918, and cysteine 974/cysteine 1080. N-linked (GlcNAc...) asparagine glycosylation is present at asparagine 842. The segment at glycine 997–arginine 1030 is disordered. Residues aspartate 1007–aspartate 1026 show a composition bias toward acidic residues. An N-linked (GlcNAc...) asparagine glycan is attached at asparagine 1077. The chain crosses the membrane as a helical span at residues leucine 1125–leucine 1145. The Cytoplasmic portion of the chain corresponds to leucine 1146–aspartate 1194.

In terms of tissue distribution, expressed in the lacrimal duct and lacrimal gland.

The protein localises to the membrane. The sequence is that of Immunoglobulin superfamily member 3 (Igsf3) from Mus musculus (Mouse).